Consider the following 576-residue polypeptide: Proline--tRNA ligase (576 aa).

This sequence belongs to the class-II aminoacyl-tRNA synthetase family. ProS type 1 subfamily. As to quaternary structure, homodimer.

It localises to the cytoplasm. It catalyses the reaction tRNA(Pro) + L-proline + ATP = L-prolyl-tRNA(Pro) + AMP + diphosphate. Functionally, catalyzes the attachment of proline to tRNA(Pro) in a two-step reaction: proline is first activated by ATP to form Pro-AMP and then transferred to the acceptor end of tRNA(Pro). As ProRS can inadvertently accommodate and process non-cognate amino acids such as alanine and cysteine, to avoid such errors it has two additional distinct editing activities against alanine. One activity is designated as 'pretransfer' editing and involves the tRNA(Pro)-independent hydrolysis of activated Ala-AMP. The other activity is designated 'posttransfer' editing and involves deacylation of mischarged Ala-tRNA(Pro). The misacylated Cys-tRNA(Pro) is not edited by ProRS. In Bordetella pertussis (strain Tohama I / ATCC BAA-589 / NCTC 13251), this protein is Proline--tRNA ligase.